A 321-amino-acid chain; its full sequence is Transaldolase (321 aa).

Residue K132 is the Schiff-base intermediate with substrate of the active site.

This sequence belongs to the transaldolase family. Type 1 subfamily. As to quaternary structure, homodimer.

The protein resides in the cytoplasm. The catalysed reaction is D-sedoheptulose 7-phosphate + D-glyceraldehyde 3-phosphate = D-erythrose 4-phosphate + beta-D-fructose 6-phosphate. The protein operates within carbohydrate degradation; pentose phosphate pathway; D-glyceraldehyde 3-phosphate and beta-D-fructose 6-phosphate from D-ribose 5-phosphate and D-xylulose 5-phosphate (non-oxidative stage): step 2/3. Functionally, transaldolase is important for the balance of metabolites in the pentose-phosphate pathway. In Rhizobium rhizogenes (strain K84 / ATCC BAA-868) (Agrobacterium radiobacter), this protein is Transaldolase.